The chain runs to 88 residues: Phosphocarrier protein HPr (88 aa).

Residues 1 to 88 enclose the HPr domain; sequence MAEKTFKVVS…DTLAKEGLAE (88 aa). Ser-12 is subject to Phosphoserine. Residue His-15 is the Pros-phosphohistidine intermediate of the active site. Residue Ser-46 is modified to Phosphoserine; by HPrK/P.

It belongs to the HPr family.

The protein localises to the cytoplasm. Phosphorylation on Ser-46 inhibits the phosphoryl transfer from enzyme I to HPr. Functionally, general (non sugar-specific) component of the phosphoenolpyruvate-dependent sugar phosphotransferase system (sugar PTS). This major carbohydrate active-transport system catalyzes the phosphorylation of incoming sugar substrates concomitantly with their translocation across the cell membrane. The phosphoryl group from phosphoenolpyruvate (PEP) is transferred to the phosphoryl carrier protein HPr by enzyme I. Phospho-HPr then transfers it to the PTS EIIA domain. In terms of biological role, P-Ser-HPr interacts with the catabolite control protein A (CcpA), forming a complex that binds to DNA at the catabolite response elements cre, operator sites preceding a large number of catabolite-regulated genes. Thus, P-Ser-HPr is a corepressor in carbon catabolite repression (CCR), a mechanism that allows bacteria to coordinate and optimize the utilization of available carbon sources. P-Ser-HPr also plays a role in inducer exclusion, in which it probably interacts with several non-PTS permeases and inhibits their transport activity. The sequence is that of Phosphocarrier protein HPr (ptsH) from Geobacillus stearothermophilus (Bacillus stearothermophilus).